A 471-amino-acid chain; its full sequence is Glutamate--tRNA ligase (471 aa).

The 'HIGH' region motif lies at 10–20 (PSPTGYLHIGG). Cys-107, Cys-109, Cys-134, and Glu-136 together coordinate Zn(2+). A 'KMSKS' region motif is present at residues 244 to 248 (RLSKR). Lys-247 contributes to the ATP binding site.

This sequence belongs to the class-I aminoacyl-tRNA synthetase family. Glutamate--tRNA ligase type 1 subfamily. Monomer. Zn(2+) serves as cofactor.

It localises to the cytoplasm. The catalysed reaction is tRNA(Glu) + L-glutamate + ATP = L-glutamyl-tRNA(Glu) + AMP + diphosphate. Its function is as follows. Catalyzes the attachment of glutamate to tRNA(Glu) in a two-step reaction: glutamate is first activated by ATP to form Glu-AMP and then transferred to the acceptor end of tRNA(Glu). This chain is Glutamate--tRNA ligase, found in Anaeromyxobacter sp. (strain Fw109-5).